A 635-amino-acid polypeptide reads, in one-letter code: Voltage-gated potassium channel KCNC4 (635 aa).

Residues 1 to 24 (MISSVCVSSYRGRKSGNKPPSKTC) are disordered. Residues 1-28 (MISSVCVSSYRGRKSGNKPPSKTCLKEE) are inactivation gate. At 1–226 (MISSVCVSSY…EDPYSSRAAR (226 aa)) the chain is on the cytoplasmic side. Phosphoserine occurs at positions 8, 9, 15, and 21. Histidine 116, cysteine 122, cysteine 143, and cysteine 144 together coordinate Zn(2+). The tract at residues 160–180 (IFESPDGGGSGAGPSDEAGDD) is disordered. The helical transmembrane segment at 227–247 (VVAFASLFFILVSITTFCLET) threads the bilayer. N-linked (GlcNAc...) asparagine glycosylation is found at asparagine 256 and asparagine 265. A helical membrane pass occupies residues 278-298 (EPILTYIEGVCVLWFTLEFLV). Topologically, residues 299–312 (RIVCCPDTLDFVKN) are cytoplasmic. The chain crosses the membrane as a helical span at residues 313–333 (LLNIIDFVAILPFYLEVGLSG). A helical; Voltage-sensor membrane pass occupies residues 345–364 (FLRVVRFVRILRIFKLTRHF). The Cytoplasmic segment spans residues 365–380 (VGLRVLGHTLRASTNE). A helical membrane pass occupies residues 381-401 (FLLLIIFLALGVLIFATMIYY). Residues threonine 436, leucine 437, glycine 438, and tyrosine 439 each coordinate K(+). The Selectivity filter signature appears at 436–441 (TLGYGD). A helical transmembrane segment spans residues 452–472 (VGALCALAGVLTIAMPVPVIV). Residues 473–635 (NNFGMYYSLA…PTAGTLFLPH (163 aa)) are Cytoplasmic-facing. A disordered region spans residues 490–580 (KKRKKHVPRP…RRALRRSTTR (91 aa)). Residues 527–542 (AREEGMIERKRADSKQ) show a composition bias toward basic and acidic residues.

It belongs to the potassium channel family. C (Shaw) (TC 1.A.1.2) subfamily. Kv3.4/KCNC4 sub-subfamily. In terms of assembly, homotetramer. Heterotetramer of potassium channel proteins. In terms of processing, phosphorylation of serine residues in the inactivation gate inhibits rapid channel closure.

It localises to the membrane. The catalysed reaction is K(+)(in) = K(+)(out). In terms of biological role, voltage-gated potassium channel that opens in response to the voltage difference across the membrane, forming a potassium-selective channel through which potassium ions pass in accordance with their electrochemical gradient. The channel displays rapid activation and inactivation kinetics. The protein is Voltage-gated potassium channel KCNC4 of Homo sapiens (Human).